Consider the following 355-residue polypeptide: Alanine racemase (355 aa).

Lysine 34 serves as the catalytic Proton acceptor; specific for D-alanine. Lysine 34 is subject to N6-(pyridoxal phosphate)lysine. Arginine 133 is a binding site for substrate. The active-site Proton acceptor; specific for L-alanine is the tyrosine 249. Methionine 297 lines the substrate pocket.

Belongs to the alanine racemase family. Pyridoxal 5'-phosphate is required as a cofactor.

The catalysed reaction is L-alanine = D-alanine. It functions in the pathway amino-acid biosynthesis; D-alanine biosynthesis; D-alanine from L-alanine: step 1/1. Its function is as follows. Catalyzes the interconversion of L-alanine and D-alanine. May also act on other amino acids. The sequence is that of Alanine racemase (alr) from Rickettsia rickettsii (strain Sheila Smith).